We begin with the raw amino-acid sequence, 366 residues long: Latent membrane protein 1 (366 aa).

Residues 1–23 (MERDLERGPPGPPRPPLGPPLSS) lie on the Cytoplasmic side of the membrane. A helical membrane pass occupies residues 24-44 (SIGLALLLLLLALLFWLYIVL). The Extracellular portion of the chain corresponds to 45–51 (SNWTGGA). A helical transmembrane segment spans residues 52–72 (LLVLYSFALMLIIIILIIFIF). The Cytoplasmic segment spans residues 73–75 (RRD). A helical transmembrane segment spans residues 76 to 96 (LLCPLGGLGLLLLMVTLLLIA). The Extracellular segment spans residues 97–106 (LWNLHGQALY). Residues 107–127 (LGIVLFIFGCLLVLGLWIYFL) traverse the membrane as a helical segment. Residues 128–139 (EILWRLGATIWQ) are Cytoplasmic-facing. Residues 140 to 160 (LLAFILAFFLAIILLIIALYL) traverse the membrane as a helical segment. Topologically, residues 161–163 (QQN) are extracellular. Residues 164–184 (WWTLLVDLLWLLLFMAILIWM) traverse the membrane as a helical segment. Over 185-366 (YFHGPRHTDE…HGPVQLSYYD (182 aa)) the chain is Cytoplasmic. A CTAR1 region spans residues 194-232 (EHHHDDSLPHPQQATDDSSHESDSNSNEGRHHLLVSGAG). Residues 194 to 366 (EHHHDDSLPH…HGPVQLSYYD (173 aa)) are disordered. The Interaction with host TRAF proteins motif lies at 204-208 (PQQAT). Residues 210–224 (DSSHESDSNSNEGRH) show a composition bias toward basic and acidic residues. Composition is skewed to low complexity over residues 251–267 (NGPQ…PQDP) and 337–346 (PHLPTLLLGT). The segment at 332–366 (GGGGDPHLPTLLLGTSGSGGDDDDPHGPVQLSYYD) is CTAR2.

The protein belongs to the herpesviridae LMP-1 family. Interacts (via PXQXT motif) with host tumor necrosis factor receptor-associated factor (TRAF) proteins TRAF1, TRAF2, TRAF3 and TRAF5. Interacts with human protein ZMYND11; leading to negatively regulate NF-kappa-B activation. Interacts with host UBE2I; this interaction induces the sumoylation of various cellular proteins. Interacts with host IRF7. Post-translationally, ubiquitinated on the N-terminus.

The protein localises to the host cell membrane. Its function is as follows. Acts as a CD40 functional homolog to prevent apoptosis of infected B-lymphocytes and drive their proliferation. Functions as a constitutively active tumor necrosis factor receptor that induces the activation of several signaling pathways, including those of the NF-kappa-B family. LMP1 signaling leads to up-regulation of antiapoptotic proteins and provide growth signals in latently infected cells. Interacts with host UBE2I and subsequently affects the sumoylation state of several cellular proteins. For example, induces the sumoylation of host IRF7 thereby limiting its transcriptional activity and modulating the activation of innate immune responses. Also inhibits host IFN-alpha-stimulated STAT2 nuclear translocation and interferon-stimulated response element transcriptional activity by interacting with and inhibiting host TYK2. Induces SUMO expression during viral latency thereby dysregulating the host sumoylation processes. In Homo sapiens (Human), this protein is Latent membrane protein 1 (LMP1).